A 303-amino-acid chain; its full sequence is Dihydroorotate dehydrogenase B (NAD(+)), catalytic subunit (303 aa).

Residues Ser-21 and 45–46 (KG) each bind FMN. Substrate-binding positions include Lys-45 and 69 to 73 (NAVGL). Residues Asn-99 and Asn-127 each coordinate FMN. Position 127 (Asn-127) interacts with substrate. Cys-130 serves as the catalytic Nucleophile. Residues Lys-165 and Ile-191 each coordinate FMN. 192 to 193 (NT) lines the substrate pocket. Residues Gly-217, 243–244 (GG), and 265–266 (GT) contribute to the FMN site.

This sequence belongs to the dihydroorotate dehydrogenase family. Type 1 subfamily. In terms of assembly, heterotetramer of 2 PyrK and 2 PyrD type B subunits. The cofactor is FMN.

Its subcellular location is the cytoplasm. It catalyses the reaction (S)-dihydroorotate + NAD(+) = orotate + NADH + H(+). It functions in the pathway pyrimidine metabolism; UMP biosynthesis via de novo pathway; orotate from (S)-dihydroorotate (NAD(+) route): step 1/1. In terms of biological role, catalyzes the conversion of dihydroorotate to orotate with NAD(+) as electron acceptor. This is Dihydroorotate dehydrogenase B (NAD(+)), catalytic subunit (pyrD) from Bacteroides thetaiotaomicron (strain ATCC 29148 / DSM 2079 / JCM 5827 / CCUG 10774 / NCTC 10582 / VPI-5482 / E50).